Consider the following 403-residue polypeptide: Beta-galactoside alpha-2,6-sialyltransferase 1 (403 aa).

Over 1–9 (MIHTNLKRK) the chain is Cytoplasmic. Residues 10 to 26 (FSCFVLVFLLFAIICVW) form a helical; Signal-anchor for type II membrane protein membrane-spanning segment. The Lumenal segment spans residues 27–403 (KKGSDYEALT…TLSGFRNNRC (377 aa)). 3 disulfide bridges follow: C139–C403, C181–C332, and C350–C361. N146 and N158 each carry an N-linked (GlcNAc...) asparagine glycan. Substrate is bound by residues S186, N209, N230, 319 to 321 (SSG), C350, Y351, T362, Y366, H367, and K373. At Y366 the chain carries Phosphotyrosine.

It belongs to the glycosyltransferase 29 family. In terms of assembly, monomer and homodimer. N-glycosylated.

It is found in the golgi apparatus. The protein localises to the golgi stack membrane. The protein resides in the secreted. It catalyses the reaction a beta-D-galactoside + CMP-N-acetyl-beta-neuraminate = an N-acetyl-alpha-neuraminyl-(2-&gt;6)-beta-D-galactosyl derivative + CMP + H(+). It participates in protein modification; protein glycosylation. In terms of biological role, transfers sialic acid from CMP-sialic acid to galactose-containing acceptor substrates. In Mus musculus (Mouse), this protein is Beta-galactoside alpha-2,6-sialyltransferase 1 (St6gal1).